A 427-amino-acid chain; its full sequence is Tumor necrosis factor receptor superfamily member 16 (427 aa).

The N-terminal stretch at 1-31 (MRRAGAACSAMDRLRLLLLLLLLLGVSFGGA) is a signal peptide. Over 32-254 (KETCSTGMYT…VVTRGTADNL (223 aa)) the chain is Extracellular. 4 TNFR-Cys repeats span residues 34–67 (TCSTGMYTHSGECCKACNLGEGVAQPCGANQTVC), 69–110 (PCLD…DAVC), 111–149 (RCSYGYYQDEETGRCEACSVCGVGSGLVFSCQDKQNTVC), and 151–191 (ECPE…DAEC). 12 cysteine pairs are disulfide-bonded: Cys-35/Cys-46, Cys-47/Cys-60, Cys-50/Cys-67, Cys-70/Cys-86, Cys-89/Cys-102, Cys-92/Cys-110, Cys-112/Cys-125, Cys-128/Cys-141, Cys-131/Cys-149, Cys-152/Cys-167, Cys-170/Cys-183, and Cys-173/Cys-191. An N-linked (GlcNAc...) asparagine glycan is attached at Asn-63. Residues 197 to 223 (RWITRSTPPEGSDVTTPSTQEPEAPPE) are disordered. A compositionally biased stretch (polar residues) spans 200–217 (TRSTPPEGSDVTTPSTQE). A helical transmembrane segment spans residues 255-275 (IPVYCSILAAVVVGLVAYIAF). Topologically, residues 276-427 (KRWNSCKQNK…CSESTATSPV (152 aa)) are cytoplasmic. 2 stretches are compositionally biased toward polar residues: residues 284–294 (NKQGANSRPVN) and 308–329 (SGISVDSQSLHDQQTHTQTASG). A disordered region spans residues 284–334 (NKQGANSRPVNQTPPPEGEKLHSDSGISVDSQSLHDQQTHTQTASGQALKG). The residue at position 314 (Ser-314) is a Phosphoserine. The tract at residues 329 to 344 (GQALKGDGNLYSSLPL) is mediates interaction with KIDINS220. The region spanning 356-421 (GDTWRHLAGE…DIVESLCSES (66 aa)) is the Death domain.

As to quaternary structure, homodimer; disulfide-linked. Heterodimer with SORCS2. The extracellular domains of the heterodimer bind NGF. The cytoplasmic region of the heterodimer binds TRIO. NGF binding mediates dissociation of TRIO from the receptor complex. Interacts with TRAF2, TRAF4, TRAF6, PTPN13 and RANBP9. Interacts through TRAF6 with SQSTM1 which bridges NGFR to NTRK1. Interacts with BEX1. Interacts with BEX3. Interacts with KIDINS220 and NTRK1. Can form a ternary complex with NTRK1 and KIDINS220 and this complex is affected by the expression levels of KIDINS220. An increase in KIDINS220 expression leads to a decreased association of NGFR and NTRK1. Interacts (via death domain) with RAB31. Interacts with NTRK2; may regulate the ligand specificity of the NTRK2 receptor. Interacts with LINGO1. Interacts with NRADD. Interacts with MAGED1; the interaction antagonizes the association NGFR:NTRK1. Interacts with RTN4R. Interacts (via death domain) with ARHGDIA and RIPK2. Interacts with BFAR. (Microbial infection) Binds to rabies virus glycoprotein Gs. N-glycosylated. O-glycosylated. Post-translationally, phosphorylated on serine residues. As to expression, detected in Schwann cells. Detected in embryonic brain, in hippocampus neurons (at protein level). Detected in brain and spinal cord.

Its subcellular location is the cell membrane. It localises to the cytoplasm. It is found in the perikaryon. The protein resides in the cell projection. The protein localises to the growth cone. Its subcellular location is the dendritic spine. In terms of biological role, low affinity neurotrophin receptor which can bind to mature NGF, BDNF, NTF3, and NTF4. Forms a heterodimeric receptor with SORCS2 that binds the precursor forms of NGF (proNGF), BDNF (proBDNF) and NTF3 (proNT3) with high affinity, and has much lower affinity for mature NGF and BDNF. Plays an important role in differentiation and survival of specific neuronal populations during development. Can mediate cell survival as well as cell death of neural cells. The heterodimeric receptor formed with SORCS2 plays a role in proBDNF-dependent synaptic plasticity, in hippocampal long term depression (LTD) and long term potentiation (LTP). Plays a role in the inactivation of RHOA. Plays a role in the regulation of the translocation of GLUT4 to the cell surface in adipocytes and skeletal muscle cells in response to insulin, probably by regulating RAB31 activity, and thereby contributes to the regulation of insulin-dependent glucose uptake. Necessary for the circadian oscillation of the clock genes BMAL1, PER1, PER2 and NR1D1 in the suprachiasmatic nucleus (SCN) of the brain and in liver and of the genes involved in glucose and lipid metabolism in the liver. (Microbial infection) Cell surface receptor for rabies virus glycoprotein Gs. Functionally, does not bind NGF, BDNF, NTF3, and NTF4. This Mus musculus (Mouse) protein is Tumor necrosis factor receptor superfamily member 16 (Ngfr).